We begin with the raw amino-acid sequence, 866 residues long: Replication factor C small subunit (866 aa).

One can recognise a DOD-type homing endonuclease domain in the interval 183 to 313 (WLGYFIGDGH…VTYALAGFGI (131 aa)).

Belongs to the activator 1 small subunits family. RfcS subfamily. In terms of assembly, heteromultimer composed of small subunits (RfcS) and large subunits (RfcL). This protein undergoes a protein self splicing that involves a post-translational excision of the intervening region (intein) followed by peptide ligation.

Functionally, part of the RFC clamp loader complex which loads the PCNA sliding clamp onto DNA. The sequence is that of Replication factor C small subunit (rfcS) from Thermococcus kodakarensis (strain ATCC BAA-918 / JCM 12380 / KOD1) (Pyrococcus kodakaraensis (strain KOD1)).